Reading from the N-terminus, the 383-residue chain is BRISC and BRCA1-A complex member 2 (383 aa).

Residue Met-1 is modified to N-acetylmethionine. A Phosphoserine modification is found at Ser-2. 2 UEV-like regions span residues 30–147 (DATN…TLLE) and 275–364 (IAAF…RAKA).

It belongs to the BABAM2 family. Component of the ARISC complex, at least composed of UIMC1/RAP80, ABRAXAS1, BRCC3/BRCC36, BABAM2 and BABAM1/NBA1. Component of the BRCA1-A complex, at least composed of BRCA1, BARD1, UIMC1/RAP80, ABRAXAS1, BRCC3/BRCC36, BABAM2 and BABAM1/NBA1. In the BRCA1-A complex, interacts directly with ABRAXAS1, BRCC3/BRCC36 and BABAM1/NBA1. Binds polyubiquitin. Component of the BRISC complex, at least composed of ABRAXAS2, BRCC3/BRCC36, BABAM2 and BABAM1/NBA1. Identified in a complex with SHMT2 and the other subunits of the BRISC complex. Component of the BRCA1/BRCA2 containing complex (BRCC), which also contains BRCA1, BRCA2, BARD1, BRCC3/BRCC36 and RAD51. BRCC is a ubiquitin E3 ligase complex that enhances cellular survival following DNA damage. May interact with FAS and TNFRSF1A. As to expression, expressed in all cell lines examined. Highly expressed in placenta.

Its subcellular location is the cytoplasm. The protein resides in the nucleus. In terms of biological role, component of the BRCA1-A complex, a complex that specifically recognizes 'Lys-63'-linked ubiquitinated histones H2A and H2AX at DNA lesions sites, leading to target the BRCA1-BARD1 heterodimer to sites of DNA damage at double-strand breaks (DSBs). The BRCA1-A complex also possesses deubiquitinase activity that specifically removes 'Lys-63'-linked ubiquitin on histones H2A and H2AX. In the BRCA1-A complex, it acts as an adapter that bridges the interaction between BABAM1/NBA1 and the rest of the complex, thereby being required for the complex integrity and modulating the E3 ubiquitin ligase activity of the BRCA1-BARD1 heterodimer. Component of the BRISC complex, a multiprotein complex that specifically cleaves 'Lys-63'-linked ubiquitin in various substrates. Within the BRISC complex, acts as an adapter that bridges the interaction between BABAM1/NBA1 and the rest of the complex, thereby being required for the complex integrity. The BRISC complex is required for normal mitotic spindle assembly and microtubule attachment to kinetochores via its role in deubiquitinating NUMA1. The BRISC complex plays a role in interferon signaling via its role in the deubiquitination of the interferon receptor IFNAR1; deubiquitination increases IFNAR1 activity by enhancing its stability and cell surface expression. Down-regulates the response to bacterial lipopolysaccharide (LPS) via its role in IFNAR1 deubiquitination. May play a role in homeostasis or cellular differentiation in cells of neural, epithelial and germline origins. May also act as a death receptor-associated anti-apoptotic protein, which inhibits the mitochondrial apoptotic pathway. May regulate TNF-alpha signaling through its interactions with TNFRSF1A; however these effects may be indirect. The polypeptide is BRISC and BRCA1-A complex member 2 (Homo sapiens (Human)).